The following is a 673-amino-acid chain: UvrABC system protein B (673 aa).

Positions 26 to 183 constitute a Helicase ATP-binding domain; sequence EGLEDGLAHQ…RRLAELQYTR (158 aa). 39–46 contacts ATP; sequence GVTGSGKT. The Beta-hairpin motif lies at 92–115; it reads YYDYYQPEAYVPSSDTFIEKDASV. The Helicase C-terminal domain maps to 431 to 597; the sequence is QVDDLLSEIR…GLNKKVVDIL (167 aa). The region spanning 633 to 668 is the UVR domain; sequence QQKIHELEGQMMQHAQNLEFEEAAQIRDQLHQLREL.

Belongs to the UvrB family. Forms a heterotetramer with UvrA during the search for lesions. Interacts with UvrC in an incision complex.

It is found in the cytoplasm. The UvrABC repair system catalyzes the recognition and processing of DNA lesions. A damage recognition complex composed of 2 UvrA and 2 UvrB subunits scans DNA for abnormalities. Upon binding of the UvrA(2)B(2) complex to a putative damaged site, the DNA wraps around one UvrB monomer. DNA wrap is dependent on ATP binding by UvrB and probably causes local melting of the DNA helix, facilitating insertion of UvrB beta-hairpin between the DNA strands. Then UvrB probes one DNA strand for the presence of a lesion. If a lesion is found the UvrA subunits dissociate and the UvrB-DNA preincision complex is formed. This complex is subsequently bound by UvrC and the second UvrB is released. If no lesion is found, the DNA wraps around the other UvrB subunit that will check the other stand for damage. The sequence is that of UvrABC system protein B from Salmonella arizonae (strain ATCC BAA-731 / CDC346-86 / RSK2980).